The following is a 293-amino-acid chain: Glutamyl-Q tRNA(Asp) synthetase (293 aa).

Residues 8–12 (RFAPS) and E44 each bind L-glutamate. A 'HIGH' region motif is present at residues 11–21 (PSPSGPLHAGS). Zn(2+)-binding residues include C98, C100, Y120, and C124. L-glutamate is bound by residues Y183 and R201. The 'KMSKS' region motif lies at 239–243 (KLSKQ). K242 serves as a coordination point for ATP.

This sequence belongs to the class-I aminoacyl-tRNA synthetase family. GluQ subfamily. Zn(2+) is required as a cofactor.

Catalyzes the tRNA-independent activation of glutamate in presence of ATP and the subsequent transfer of glutamate onto a tRNA(Asp). Glutamate is transferred on the 2-amino-5-(4,5-dihydroxy-2-cyclopenten-1-yl) moiety of the queuosine in the wobble position of the QUC anticodon. This is Glutamyl-Q tRNA(Asp) synthetase from Janthinobacterium sp. (strain Marseille) (Minibacterium massiliensis).